We begin with the raw amino-acid sequence, 251 residues long: uncharacterized protein (251 aa).

The first 25 residues, 1-25, serve as a signal peptide directing secretion; that stretch reads MSAGRLNKKSLGIVMLLSVGLLLAG. A lipid anchor (N-palmitoyl cysteine) is attached at Cys-26. Cys-26 is lipidated: S-diacylglycerol cysteine. The region spanning 40-84 is the LysM domain; it reads SVYTVKRGDTLYRISRTTGTSVKELARLNGISPPYTIEVGQKLKL. The segment covering 93 to 112 has biased composition (low complexity); it reads TRKSTAKSTTKTASVTPSSA. Positions 93–115 are disordered; it reads TRKSTAKSTTKTASVTPSSAVPK.

It belongs to the peptidase M23B family.

The protein localises to the cell inner membrane. This is an uncharacterized protein from Escherichia coli (strain K12).